The chain runs to 574 residues: Bifunctional NADP phosphatase/NAD kinase (574 aa).

An NADP phosphatase region spans residues 1-297 (MVIMEGFKIA…KLIALFGNRW (297 aa)). Mg(2+)-binding residues include Glu69, Asp87, Ile89, Asp90, and Asp243. The segment at 302–574 (VKFGIVVRED…NKLSRCLGIK (273 aa)) is NAD kinase. Residue Asp362 is the Proton acceptor of the active site. NAD(+) contacts are provided by residues 362 to 363 (DG), Arg367, 436 to 437 (NE), Lys447, Arg464, Asp466, and 477 to 482 (TAYSLS).

This sequence in the N-terminal section; belongs to the inositol monophosphatase superfamily. It in the C-terminal section; belongs to the NAD kinase family. As to quaternary structure, homotetramer. The cofactor is Mg(2+).

It is found in the cytoplasm. The enzyme catalyses NAD(+) + ATP = ADP + NADP(+) + H(+). It catalyses the reaction NADP(+) + H2O = phosphate + NAD(+). The catalysed reaction is UTP + NAD(+) = UDP + NADP(+) + H(+). It carries out the reaction 5-methyl-UTP + NAD(+) = 5-methyl-UDP + NADP(+) + H(+). The enzyme catalyses CTP + NAD(+) = CDP + NADP(+) + H(+). It catalyses the reaction GTP + NAD(+) = GDP + NADP(+) + H(+). The catalysed reaction is dATP + NAD(+) = dADP + NADP(+) + H(+). It carries out the reaction NADPH + H2O = phosphate + NADH. The enzyme catalyses adenosine 2'-phosphate + H2O = adenosine + phosphate. It catalyses the reaction beta-D-fructose 1,6-bisphosphate + H2O = beta-D-fructose 6-phosphate + phosphate. Phosphatase activity is slightly inhibited by ADP, NADH and ATP, and moderately inhibited by NAD and 5'-AMP. Kinase activity is slightly inhibited by ADP and NADP. Functionally, involved in the regulation of the intracellular balance between NAD(H) and NADP(H), and is a key enzyme in the biosynthesis of NADP. Catalyzes the phosphorylation and dephosphorylation of NAD and NADP, respectively. Although it shows conflicting dual activities and is able to supply NADP, it seems that its physiological role is to prevent excess accumulation of NADP. Kinase can use ATP and other nucleoside triphosphates (UTP, TTP, CTP, GTP) as well as inorganic polyphosphate (poly(P)) as phosphoryl donors, however poly(P) is not considered to be the physiological phosphoryl donor. NAD is the preferred substrate for the kinase, but NADH can also be used as phosphoryl acceptor. Phosphatase can use NADP or NADPH as phosphoryl donor, but NADP is the preferred substrate. Phosphatase also has an activity toward the terminal phosphate group at C-2 of adenosine in 2'-AMP and toward the phosphate group at C-1 of fructose 1,6-bisphosphate, but not toward inositol 1-phosphate. In Methanocaldococcus jannaschii (strain ATCC 43067 / DSM 2661 / JAL-1 / JCM 10045 / NBRC 100440) (Methanococcus jannaschii), this protein is Bifunctional NADP phosphatase/NAD kinase.